Consider the following 89-residue polypeptide: Dynein light chain 1, cytoplasmic (89 aa).

Lys-36 is subject to N6-acetyllysine. Lys-43 is covalently cross-linked (Glycyl lysine isopeptide (Lys-Gly) (interchain with G-Cter in SUMO2)). The interval 67 to 89 (THETKHFIYFYLGQVAILLFKSG) is interaction with ESR1. Ser-88 bears the Phosphoserine mark.

The protein belongs to the dynein light chain family. In terms of assembly, homodimer. Monomer; the monomeric form is incapable of binding to target proteins. The cytoplasmic dynein 1 complex consists of two catalytic heavy chains (HCs) and a number of non-catalytic subunits presented by intermediate chains (ICs), light intermediate chains (LICs) and light chains (LCs); the composition seems to vary in respect to the IC, LIC and LC composition. The heavy chain homodimer serves as a scaffold for the probable homodimeric assembly of the respective non-catalytic subunits. The ICs and LICs bind directly to the HC dimer and the LCs assemble on the IC dimer. Interacts with TXNDC17. Interacts with WWC1 and ESR1. The WWC1-DYNLL1 interaction is mandatory for the recruitment and transactivation functions of ESR1 or DYNLL1 to the target chromatin. Interacts with BCL2L11. Interacts with BCL2; the interaction is greatly enhanced in the nucleus and in mitochondria upon induction of apoptosis. Interacts with PAK1; the interaction requires dimeric DYNLL1. Interacts with MYZAP. Part of an astrin (SPAG5)-kinastrin (SKAP) complex containing KNSTRN, SPAG5, PLK1, DYNLL1 and SGO2. Interacts with ATMIN; this interaction inhibits ATMIN transcriptional activity and hence may play a role in a feedback loop whereby DYNLL1 inhibits transactivation of its own promoter by ATMIN. Interacts with NEK9 (not phosphorylated at 'Ser-944'). Interacts with BICD2. Interacts with BCAS1. Interacts with Basson/BSN. Interacts with HDAC6. Interacts with TPPP. Interacts with AMBRA1 (via TQT motifs); tethering AMBRA1 to the cytoskeleton. Interacts with FAM83D/CHICA (via C-terminus). Interacts with HMMR, SPAG5/Astrin and KNSTRN/Kinastrin. Interacts with TLK2. Interacts with NOS1. Interacts with WWC1, WWC2 and WWC3. Interacts with MRE11; inhibiting MRE11 homodimerization and activity. (Microbial infection) Interacts with bovine immunodeficiency virus Gag protein; this interaction is critical for intracellular microtubule-dependent viral genome transport. In terms of processing, phosphorylation at Ser-88 promotes recruitment to DNA double-strand breaks (DSBs) by TP53BP1 and ability to inhibit MRE11.

It localises to the cytoplasm. It is found in the cytoskeleton. The protein resides in the microtubule organizing center. The protein localises to the centrosome. Its subcellular location is the chromosome. It localises to the nucleus. It is found in the mitochondrion. Its function is as follows. Acts as one of several non-catalytic accessory components of the cytoplasmic dynein 1 complex that are thought to be involved in linking dynein to cargos and to adapter proteins that regulate dynein function. Cytoplasmic dynein 1 acts as a motor for the intracellular retrograde motility of vesicles and organelles along microtubules. May play a role in changing or maintaining the spatial distribution of cytoskeletal structures. In addition to its role in cytoskeleton and transport, acts as a protein-protein adapter, which inhibits and/or sequesters target proteins. Involved in the response to DNA damage by acting as a key regulator of DNA end resection: when phosphorylated at Ser-88, recruited to DNA double-strand breaks (DSBs) by TP53BP1 and acts by disrupting MRE11 dimerization, thereby inhibiting DNA end resection. In a subset of DSBs, DYNLL1 remains unphosphorylated and promotes the recruitment of the Shieldin complex. Binds and inhibits the catalytic activity of neuronal nitric oxide synthase/NOS1. Promotes transactivation functions of ESR1 and plays a role in the nuclear localization of ESR1. Regulates apoptotic activities of BCL2L11 by sequestering it to microtubules. Upon apoptotic stimuli the BCL2L11-DYNLL1 complex dissociates from cytoplasmic dynein and translocates to mitochondria and sequesters BCL2 thus neutralizing its antiapoptotic activity. This chain is Dynein light chain 1, cytoplasmic (DYNLL1), found in Bos taurus (Bovine).